The primary structure comprises 454 residues: Bifunctional protein GlmU (454 aa).

Positions 1–225 (MNIVILAAGM…VWETLGVNSK (225 aa)) are pyrophosphorylase. Residues 6–9 (LAAG), K20, Q71, 76–77 (GT), 98–100 (YGD), G135, E150, N165, and N223 each bind UDP-N-acetyl-alpha-D-glucosamine. D100 contacts Mg(2+). N223 contacts Mg(2+). The tract at residues 226-246 (LQLAEVERIHQGNQARRLLEA) is linker. Residues 247–454 (GVTLLDPARI…WQRPVKQPKQ (208 aa)) form an N-acetyltransferase region. UDP-N-acetyl-alpha-D-glucosamine is bound by residues R329 and K347. The active-site Proton acceptor is H359. UDP-N-acetyl-alpha-D-glucosamine-binding residues include Y362 and N373. Residues A376, 382 to 383 (NY), S401, A419, and R436 contribute to the acetyl-CoA site.

It in the N-terminal section; belongs to the N-acetylglucosamine-1-phosphate uridyltransferase family. The protein in the C-terminal section; belongs to the transferase hexapeptide repeat family. Homotrimer. Mg(2+) serves as cofactor.

Its subcellular location is the cytoplasm. It catalyses the reaction alpha-D-glucosamine 1-phosphate + acetyl-CoA = N-acetyl-alpha-D-glucosamine 1-phosphate + CoA + H(+). It carries out the reaction N-acetyl-alpha-D-glucosamine 1-phosphate + UTP + H(+) = UDP-N-acetyl-alpha-D-glucosamine + diphosphate. It participates in nucleotide-sugar biosynthesis; UDP-N-acetyl-alpha-D-glucosamine biosynthesis; N-acetyl-alpha-D-glucosamine 1-phosphate from alpha-D-glucosamine 6-phosphate (route II): step 2/2. The protein operates within nucleotide-sugar biosynthesis; UDP-N-acetyl-alpha-D-glucosamine biosynthesis; UDP-N-acetyl-alpha-D-glucosamine from N-acetyl-alpha-D-glucosamine 1-phosphate: step 1/1. It functions in the pathway bacterial outer membrane biogenesis; LPS lipid A biosynthesis. Functionally, catalyzes the last two sequential reactions in the de novo biosynthetic pathway for UDP-N-acetylglucosamine (UDP-GlcNAc). The C-terminal domain catalyzes the transfer of acetyl group from acetyl coenzyme A to glucosamine-1-phosphate (GlcN-1-P) to produce N-acetylglucosamine-1-phosphate (GlcNAc-1-P), which is converted into UDP-GlcNAc by the transfer of uridine 5-monophosphate (from uridine 5-triphosphate), a reaction catalyzed by the N-terminal domain. The sequence is that of Bifunctional protein GlmU from Cupriavidus taiwanensis (strain DSM 17343 / BCRC 17206 / CCUG 44338 / CIP 107171 / LMG 19424 / R1) (Ralstonia taiwanensis (strain LMG 19424)).